The primary structure comprises 374 residues: Erythronate-4-phosphate dehydrogenase (374 aa).

Substrate-binding residues include serine 45 and threonine 67. Aspartate 147 contributes to the NAD(+) binding site. Arginine 208 is a catalytic residue. Aspartate 232 contributes to the NAD(+) binding site. Residue glutamate 237 is part of the active site. The Proton donor role is filled by histidine 254. NAD(+) is bound at residue glycine 257.

Belongs to the D-isomer specific 2-hydroxyacid dehydrogenase family. PdxB subfamily. As to quaternary structure, homodimer.

It localises to the cytoplasm. The catalysed reaction is 4-phospho-D-erythronate + NAD(+) = (R)-3-hydroxy-2-oxo-4-phosphooxybutanoate + NADH + H(+). It functions in the pathway cofactor biosynthesis; pyridoxine 5'-phosphate biosynthesis; pyridoxine 5'-phosphate from D-erythrose 4-phosphate: step 2/5. Its function is as follows. Catalyzes the oxidation of erythronate-4-phosphate to 3-hydroxy-2-oxo-4-phosphonooxybutanoate. The sequence is that of Erythronate-4-phosphate dehydrogenase from Pseudoalteromonas atlantica (strain T6c / ATCC BAA-1087).